A 447-amino-acid polypeptide reads, in one-letter code: Keratin, type I cytoskeletal 15 (447 aa).

A head region spans residues 1–93 (MATTFLQTSS…GGDGGLLSGN (93 aa)). Phosphoserine is present on residues serine 16, serine 28, serine 33, and serine 47. The segment at 94-129 (EKVTMQNLNDRLASYLDKVRALEEANTELEVKIRDW) is coil 1A. The 313-residue stretch at 94–406 (EKVTMQNLND…NLLEGQDAKM (313 aa)) folds into the IF rod domain. Threonine 120 bears the Phosphothreonine mark. Residues 130–148 (YQKQSPASPDRDYSHYFKT) form a linker 1 region. A coil 1B region spans residues 149–240 (MEEIRDKILA…KNHEEEMKEF (92 aa)). Residues 241–260 (SSQLAGQVNVEMDAAPGVDL) form a linker 12 region. Positions 261 to 402 (TRMLAEMREQ…STYRNLLEGQ (142 aa)) are coil 2. A Glycyl lysine isopeptide (Lys-Gly) (interchain with G-Cter in SUMO2) cross-link involves residue lysine 289. 2 positions are modified to phosphothreonine: threonine 290 and threonine 312. The tail stretch occupies residues 403–447 (DAKMAAIGVREASLRGGSSGGGSNFHISVEESVDGKVVSSRKRES). A Glycyl lysine isopeptide (Lys-Gly) (interchain with G-Cter in SUMO1); alternate cross-link involves residue lysine 438. Residue lysine 438 forms a Glycyl lysine isopeptide (Lys-Gly) (interchain with G-Cter in SUMO2); alternate linkage.

The protein belongs to the intermediate filament family. Heterotetramer of two type I and two type II keratins. Forms a heterodimer with KRT14. Interacts with NOD2.

The polypeptide is Keratin, type I cytoskeletal 15 (Rattus norvegicus (Rat)).